A 699-amino-acid polypeptide reads, in one-letter code: Elongation factor G (699 aa).

The region spanning 8–288 (EDYRNFGIMA…AVVDYLPSPI (281 aa)) is the tr-type G domain. GTP-binding positions include 17–24 (AHIDAGKT), 86–90 (DTPGH), and 140–143 (NKMD).

This sequence belongs to the TRAFAC class translation factor GTPase superfamily. Classic translation factor GTPase family. EF-G/EF-2 subfamily.

The protein localises to the cytoplasm. In terms of biological role, catalyzes the GTP-dependent ribosomal translocation step during translation elongation. During this step, the ribosome changes from the pre-translocational (PRE) to the post-translocational (POST) state as the newly formed A-site-bound peptidyl-tRNA and P-site-bound deacylated tRNA move to the P and E sites, respectively. Catalyzes the coordinated movement of the two tRNA molecules, the mRNA and conformational changes in the ribosome. This Sinorhizobium fredii (strain NBRC 101917 / NGR234) protein is Elongation factor G.